We begin with the raw amino-acid sequence, 197 residues long: Recombination protein RecR (197 aa).

The segment at 56-71 (CRLCNNFSEAEVCEVC) adopts a C4-type zinc-finger fold. The 96-residue stretch at 79–174 (RQLAVVEMPA…KVSRLARGVP (96 aa)) folds into the Toprim domain.

The protein belongs to the RecR family.

In terms of biological role, may play a role in DNA repair. It seems to be involved in an RecBC-independent recombinational process of DNA repair. It may act with RecF and RecO. This chain is Recombination protein RecR, found in Thiobacillus denitrificans (strain ATCC 25259 / T1).